A 300-amino-acid polypeptide reads, in one-letter code: TLR adapter interacting with SLC15A4 on the lysosome (300 aa).

The pLxIS motif signature appears at 289 to 293 (SLHIS). Phosphoserine is present on Ser-293.

In terms of assembly, interacts (via pLxIS motif) with IRF5; leading to IRF5 activation. Interacts with SLC15A4; leading to its recruitment to endolysosome. Post-translationally, the phosphorylated pLxIS motif constitutes an IRF5-binding motif, leading to recruitment of the transcription factor IRF5 to induce type-I interferons and other cytokines.

It is found in the lysosome membrane. The protein resides in the endosome membrane. The protein localises to the nucleus. It localises to the cytoplasm. In terms of biological role, innate immune adapter that mediates the recruitment and activation of IRF5 downstream of endolysosomal toll-like receptors TLR7, TLR8 and TLR9. Following recruitment to endolysosome by SLC15A4 downstream of TLR7, TLR8 and TLR9, specifically recruits IRF5 transcription factor via its pLxIS motif, leading to IRF5 activation and subsequent expression of type I interferons. Plays a role in the regulation of endolysosomal pH in immune cells such as B-cells, dendritic cells and monocytes. The polypeptide is TLR adapter interacting with SLC15A4 on the lysosome (Bos taurus (Bovine)).